The following is a 504-amino-acid chain: ATP synthase subunit beta (504 aa).

The interval 1–23 (MAKAATPKETAAAKKPAAPKKAA) is disordered. 182-189 (GGAGVGKT) contributes to the ATP binding site.

Belongs to the ATPase alpha/beta chains family. In terms of assembly, F-type ATPases have 2 components, CF(1) - the catalytic core - and CF(0) - the membrane proton channel. CF(1) has five subunits: alpha(3), beta(3), gamma(1), delta(1), epsilon(1). CF(0) has three main subunits: a(1), b(2) and c(9-12). The alpha and beta chains form an alternating ring which encloses part of the gamma chain. CF(1) is attached to CF(0) by a central stalk formed by the gamma and epsilon chains, while a peripheral stalk is formed by the delta and b chains.

It localises to the cell inner membrane. It catalyses the reaction ATP + H2O + 4 H(+)(in) = ADP + phosphate + 5 H(+)(out). Functionally, produces ATP from ADP in the presence of a proton gradient across the membrane. The catalytic sites are hosted primarily by the beta subunits. This is ATP synthase subunit beta from Rhizobium meliloti (strain 1021) (Ensifer meliloti).